A 526-amino-acid polypeptide reads, in one-letter code: Sterol 14-alpha demethylase CYP51A (526 aa).

The chain crosses the membrane as a helical span at residues 27–47; it reads IGFAVFLVLSVVLNVLNQLLF. Lanosterol is bound at residue Tyr-123. Cys-470 is a binding site for heme.

This sequence belongs to the cytochrome P450 family. Requires heme as cofactor.

It localises to the endoplasmic reticulum membrane. The enzyme catalyses a 14alpha-methyl steroid + 3 reduced [NADPH--hemoprotein reductase] + 3 O2 = a Delta(14) steroid + formate + 3 oxidized [NADPH--hemoprotein reductase] + 4 H2O + 4 H(+). The catalysed reaction is a 14alpha-methyl steroid + reduced [NADPH--hemoprotein reductase] + O2 = a 14alpha-hydroxymethyl steroid + oxidized [NADPH--hemoprotein reductase] + H2O + H(+). It catalyses the reaction a 14alpha-hydroxymethyl steroid + reduced [NADPH--hemoprotein reductase] + O2 = a 14alpha-formyl steroid + oxidized [NADPH--hemoprotein reductase] + 2 H2O + H(+). It carries out the reaction a 14alpha-formyl steroid + reduced [NADPH--hemoprotein reductase] + O2 = a Delta(14) steroid + formate + oxidized [NADPH--hemoprotein reductase] + H2O + 2 H(+). The enzyme catalyses lanosterol + 3 reduced [NADPH--hemoprotein reductase] + 3 O2 = 4,4-dimethyl-5alpha-cholesta-8,14,24-trien-3beta-ol + formate + 3 oxidized [NADPH--hemoprotein reductase] + 4 H2O + 4 H(+). The catalysed reaction is lanosterol + reduced [NADPH--hemoprotein reductase] + O2 = 32-hydroxylanosterol + oxidized [NADPH--hemoprotein reductase] + H2O + H(+). It catalyses the reaction 32-hydroxylanosterol + reduced [NADPH--hemoprotein reductase] + O2 = 32-oxolanosterol + oxidized [NADPH--hemoprotein reductase] + 2 H2O + H(+). It carries out the reaction 32-oxolanosterol + reduced [NADPH--hemoprotein reductase] + O2 = 4,4-dimethyl-5alpha-cholesta-8,14,24-trien-3beta-ol + formate + oxidized [NADPH--hemoprotein reductase] + H2O + 2 H(+). The enzyme catalyses eburicol + 3 reduced [NADPH--hemoprotein reductase] + 3 O2 = 14-demethyleburicol + formate + 3 oxidized [NADPH--hemoprotein reductase] + 4 H2O + 4 H(+). The catalysed reaction is eburicol + reduced [NADPH--hemoprotein reductase] + O2 = 32-hydroxyeburicol + oxidized [NADPH--hemoprotein reductase] + H2O + H(+). It catalyses the reaction 32-hydroxyeburicol + reduced [NADPH--hemoprotein reductase] + O2 = 32-oxoeburicol + oxidized [NADPH--hemoprotein reductase] + 2 H2O + H(+). It carries out the reaction 32-oxoeburicol + reduced [NADPH--hemoprotein reductase] + O2 = 14-demethyleburicol + formate + oxidized [NADPH--hemoprotein reductase] + H2O + 2 H(+). Its pathway is steroid metabolism; ergosterol biosynthesis. Together with cyp51A and cyp51C, encodes the sterol 14alpha-demethylase that plays a critical role in the third module of ergosterol biosynthesis pathway, being ergosterol the major sterol component in fungal membranes that participates in a variety of functions. Essential for ascospore production. The third module or late pathway involves the ergosterol synthesis itself through consecutive reactions that mainly occur in the endoplasmic reticulum (ER) membrane. In filamentous fungi, during the initial step of this module, lanosterol (lanosta-8,24-dien-3beta-ol) can be metabolized to eburicol. Sterol 14alpha-demethylase catalyzes the three-step oxidative removal of the 14alpha-methyl group (C-32) of both these sterols in the form of formate, and converts eburicol and lanosterol to 14-demethyleburicol (4,4,24-trimethylergosta-8,14,24(28)-trienol) and 4,4-dimethyl-5alpha-cholesta-8,14,24-trien-3beta-ol, respectively, which are further metabolized by other enzymes in the pathway to ergosterol. Can also use substrates not intrinsic to fungi, such as 24,25-dihydrolanosterol (DHL), producing 4,4'-dimethyl-8,14-cholestadien-3-beta-ol, but at lower rates than the endogenous substrates. This is Sterol 14-alpha demethylase CYP51A from Gibberella zeae (strain ATCC MYA-4620 / CBS 123657 / FGSC 9075 / NRRL 31084 / PH-1) (Wheat head blight fungus).